We begin with the raw amino-acid sequence, 119 residues long: Large ribosomal subunit protein uL14c (119 aa).

The protein belongs to the universal ribosomal protein uL14 family. As to quaternary structure, part of the 50S ribosomal subunit.

The protein localises to the plastid. It localises to the chloroplast. Functionally, binds to 23S rRNA. The protein is Large ribosomal subunit protein uL14c of Ostreococcus tauri.